We begin with the raw amino-acid sequence, 204 residues long: Large ribosomal subunit protein eL15 (204 aa).

The protein belongs to the eukaryotic ribosomal protein eL15 family.

The chain is Large ribosomal subunit protein eL15 (RPL15) from Tetrahymena thermophila (strain SB210).